The primary structure comprises 492 residues: Aerolysin-4 (492 aa).

Positions 1-23 are cleaved as a signal peptide; that stretch reads MKKLKITGLSLIISGLLMAQAQA. Disulfide bonds link cysteine 42-cysteine 98 and cysteine 182-cysteine 187. Positions 68–84 are interaction with host N-linked glycan; that stretch reads WQISGLANGWVIMGPGY. Positions 256–288 are part of the transmembrane beta-barrel after proteolytic activation of the toxin and insertion into the host membrane; that stretch reads YGLSEKVTTKNKFKWPLVGETELSIEIAANQSW. The interaction with glycans from host GPI-anchor stretch occupies residues 346-355; the sequence is RWGGNAWYTH. A propeptide spanning residues 446 to 492 is cleaved from the precursor; it reads AAASHSSRARNLSAGQGLRLEIPLDAQELSGLGFNNVSLSVTPAANQ.

Belongs to the aerolysin family. Homodimer in solution; homoheptamer in the host membrane. After binding to GPI-anchored proteins in target membranes and proteolytic removal of the C-terminal propeptide, the protein assembles into a heptameric pre-pore complex. A further conformation change leads to insertion into the host membrane. In terms of processing, proteolytic cleavage and subsequent release of the propeptide trigger a major conformation change, leading to the formation of a heptameric pre-pore that then inserts into the host membrane.

It localises to the secreted. Its subcellular location is the host cell membrane. Functionally, secreted, cytolytic toxin that forms pores in host membranes after proteolytic removal of a C-terminal propeptide, leading to destruction of the membrane permeability barrier and cell death. The pores are formed by transmembrane beta-strands and are approximately 3 nm in diameter. The protein is Aerolysin-4 (ahh4) of Aeromonas hydrophila.